The chain runs to 271 residues: Tryptophan synthase alpha chain (271 aa).

Residues Glu-49 and Asp-60 each act as proton acceptor in the active site.

The protein belongs to the TrpA family. Tetramer of two alpha and two beta chains.

The enzyme catalyses (1S,2R)-1-C-(indol-3-yl)glycerol 3-phosphate + L-serine = D-glyceraldehyde 3-phosphate + L-tryptophan + H2O. The protein operates within amino-acid biosynthesis; L-tryptophan biosynthesis; L-tryptophan from chorismate: step 5/5. In terms of biological role, the alpha subunit is responsible for the aldol cleavage of indoleglycerol phosphate to indole and glyceraldehyde 3-phosphate. The sequence is that of Tryptophan synthase alpha chain from Leptothrix cholodnii (strain ATCC 51168 / LMG 8142 / SP-6) (Leptothrix discophora (strain SP-6)).